The primary structure comprises 156 residues: Ribosomal RNA large subunit methyltransferase H (156 aa).

Residues Leu-73, Gly-104, and 123–128 (LSPLTL) contribute to the S-adenosyl-L-methionine site.

This sequence belongs to the RNA methyltransferase RlmH family. As to quaternary structure, homodimer.

Its subcellular location is the cytoplasm. It catalyses the reaction pseudouridine(1915) in 23S rRNA + S-adenosyl-L-methionine = N(3)-methylpseudouridine(1915) in 23S rRNA + S-adenosyl-L-homocysteine + H(+). Specifically methylates the pseudouridine at position 1915 (m3Psi1915) in 23S rRNA. The chain is Ribosomal RNA large subunit methyltransferase H from Serratia proteamaculans (strain 568).